We begin with the raw amino-acid sequence, 310 residues long: Ribosomal RNA small subunit methyltransferase H (310 aa).

S-adenosyl-L-methionine contacts are provided by residues 33–35, Asp-52, Phe-79, Asp-98, and Gln-105; that span reads GGH.

The protein belongs to the methyltransferase superfamily. RsmH family.

The protein localises to the cytoplasm. The enzyme catalyses cytidine(1402) in 16S rRNA + S-adenosyl-L-methionine = N(4)-methylcytidine(1402) in 16S rRNA + S-adenosyl-L-homocysteine + H(+). Functionally, specifically methylates the N4 position of cytidine in position 1402 (C1402) of 16S rRNA. The protein is Ribosomal RNA small subunit methyltransferase H of Campylobacter jejuni (strain RM1221).